Consider the following 378-residue polypeptide: Diacetylchitobiose uptake system ATP-binding protein MsiK (378 aa).

Residues Val4 to Ile236 enclose the ABC transporter domain. Gly38 to Ser45 is a binding site for ATP.

The protein belongs to the ABC transporter superfamily. As to quaternary structure, the DasABC-MsiK complex is composed of two ATP-binding proteins (MsiK), two transmembrane proteins (DasB and DasC) and a solute-binding protein (DasA). The NgcEFG-MsiK complex is composed of two ATP-binding proteins (MsiK), two transmembrane proteins (NgcF and NgcG) and a solute-binding protein (NgcE).

Its subcellular location is the cell membrane. Functionally, part of the ABC transporter complexes DasABC-MsiK and NgcEFG-MsiK involved in N,N'-diacetylchitobiose ((GlcNAc)2) uptake. Responsible for energy coupling to the transport system. This chain is Diacetylchitobiose uptake system ATP-binding protein MsiK, found in Streptomyces coelicolor (strain ATCC BAA-471 / A3(2) / M145).